A 100-amino-acid polypeptide reads, in one-letter code: MHITPREQEKLMIVVAADLARRRKDRGLKLNHPEAVALITYELIEGARDGRTVADLMSWGSTILTRDDVLEGIPEMIPDIQVEATFDDGTKLVTVHNPIR.

It belongs to the urease gamma subunit family. As to quaternary structure, heterotrimer of UreA (gamma), UreB (beta) and UreC (alpha) subunits. Three heterotrimers associate to form the active enzyme.

The protein localises to the cytoplasm. The enzyme catalyses urea + 2 H2O + H(+) = hydrogencarbonate + 2 NH4(+). It functions in the pathway nitrogen metabolism; urea degradation; CO(2) and NH(3) from urea (urease route): step 1/1. This is Urease subunit gamma from Corynebacterium glutamicum (strain R).